We begin with the raw amino-acid sequence, 265 residues long: Thioredoxin-related transmembrane protein 2 homolog (265 aa).

Positions Met1–Ser32 are cleaved as a signal peptide. Residues Thr33 to Arg96 lie on the Extracellular side of the membrane. Residues Ala97 to Pro117 traverse the membrane as a helical segment. Residues Glu118–Asp265 lie on the Cytoplasmic side of the membrane. Positions Gln126–Ala230 constitute a Thioredoxin domain. The Di-lysine motif signature appears at Lys262–Asp265.

The protein localises to the membrane. The sequence is that of Thioredoxin-related transmembrane protein 2 homolog from Caenorhabditis elegans.